Consider the following 220-residue polypeptide: MKFRLAAVAAAALLASSASFAGMVTGSSNIDFLAVDGQKANRSLLKETRSFNINDTHTHQVVVRVSELIREGSDRTLFESDPIVVTFQGSTEDIRISAPRLTNEREANNFKANPKITVKTVSGAEIASKQDYLKQEGFLPGVNLEENLSNYNQSGATASVAGFATASMPATVGTVQNGKVKKGKVTVQGENAAEQMLQYWYQQADKETQERFLNWVKTQK.

Positions methionine 1 to alanine 21 are cleaved as a signal peptide.

This sequence belongs to the UPF0319 family.

The protein is UPF0319 protein Asuc_1002 of Actinobacillus succinogenes (strain ATCC 55618 / DSM 22257 / CCUG 43843 / 130Z).